Reading from the N-terminus, the 182-residue chain is Oligoribonuclease (182 aa).

One can recognise an Exonuclease domain in the interval 8–171 (LIWIDLEMTG…DDIRESIKEL (164 aa)). The active site involves Tyr-129.

It belongs to the oligoribonuclease family.

It localises to the cytoplasm. Functionally, 3'-to-5' exoribonuclease specific for small oligoribonucleotides. The polypeptide is Oligoribonuclease (Haemophilus influenzae (strain 86-028NP)).